Reading from the N-terminus, the 325-residue chain is Malate dehydrogenase (325 aa).

Residues 10–15 (GAGNVG) and aspartate 34 contribute to the NAD(+) site. Residues arginine 88 and arginine 94 each coordinate substrate. Residues asparagine 101 and 124–126 (VSN) contribute to the NAD(+) site. Residues asparagine 126 and arginine 157 each contribute to the substrate site. Histidine 181 (proton acceptor) is an active-site residue.

Belongs to the LDH/MDH superfamily.

The catalysed reaction is (S)-malate + NAD(+) = oxaloacetate + NADH + H(+). Catalyzes the reversible oxidation of malate to oxaloacetate. The polypeptide is Malate dehydrogenase (mdh) (Thermoplasma volcanium (strain ATCC 51530 / DSM 4299 / JCM 9571 / NBRC 15438 / GSS1)).